The primary structure comprises 193 residues: Tellurium resistance protein TerZ (193 aa).

Belongs to the CAPAB/TerDEXZ family.

Its function is as follows. Not known; seems to contribute to the tellurium resistance (Ter) mechanism. Also involved in phage inhibition (Phi) and colicin resistance (PacB). The polypeptide is Tellurium resistance protein TerZ (terZ) (Serratia marcescens).